The sequence spans 778 residues: Endonuclease MutS2 (778 aa).

328-335 (GPNTGGKT) contributes to the ATP binding site. Residues 702–777 (LDLRGKRYEE…GSGATIVTFK (76 aa)) enclose the Smr domain.

It belongs to the DNA mismatch repair MutS family. MutS2 subfamily. In terms of assembly, homodimer. Binds to stalled ribosomes, contacting rRNA.

In terms of biological role, endonuclease that is involved in the suppression of homologous recombination and thus may have a key role in the control of bacterial genetic diversity. Acts as a ribosome collision sensor, splitting the ribosome into its 2 subunits. Detects stalled/collided 70S ribosomes which it binds and splits by an ATP-hydrolysis driven conformational change. Acts upstream of the ribosome quality control system (RQC), a ribosome-associated complex that mediates the extraction of incompletely synthesized nascent chains from stalled ribosomes and their subsequent degradation. Probably generates substrates for RQC. The chain is Endonuclease MutS2 from Streptococcus pneumoniae (strain 70585).